The primary structure comprises 381 residues: Queuine tRNA-ribosyltransferase (381 aa).

Aspartate 92 acts as the Proton acceptor in catalysis. Substrate is bound by residues 92-96 (DSGGF), aspartate 146, glutamine 190, and glycine 217. Positions 248–254 (GVGRPED) are RNA binding. Aspartate 267 acts as the Nucleophile in catalysis. The segment at 272–276 (TRNAR) is RNA binding; important for wobble base 34 recognition. Zn(2+) contacts are provided by cysteine 305, cysteine 307, cysteine 310, and histidine 337.

This sequence belongs to the queuine tRNA-ribosyltransferase family. Homodimer. Within each dimer, one monomer is responsible for RNA recognition and catalysis, while the other monomer binds to the replacement base PreQ1. Requires Zn(2+) as cofactor.

It carries out the reaction 7-aminomethyl-7-carbaguanine + guanosine(34) in tRNA = 7-aminomethyl-7-carbaguanosine(34) in tRNA + guanine. It participates in tRNA modification; tRNA-queuosine biosynthesis. Its function is as follows. Catalyzes the base-exchange of a guanine (G) residue with the queuine precursor 7-aminomethyl-7-deazaguanine (PreQ1) at position 34 (anticodon wobble position) in tRNAs with GU(N) anticodons (tRNA-Asp, -Asn, -His and -Tyr). Catalysis occurs through a double-displacement mechanism. The nucleophile active site attacks the C1' of nucleotide 34 to detach the guanine base from the RNA, forming a covalent enzyme-RNA intermediate. The proton acceptor active site deprotonates the incoming PreQ1, allowing a nucleophilic attack on the C1' of the ribose to form the product. After dissociation, two additional enzymatic reactions on the tRNA convert PreQ1 to queuine (Q), resulting in the hypermodified nucleoside queuosine (7-(((4,5-cis-dihydroxy-2-cyclopenten-1-yl)amino)methyl)-7-deazaguanosine). The chain is Queuine tRNA-ribosyltransferase from Xanthomonas oryzae pv. oryzae (strain MAFF 311018).